Reading from the N-terminus, the 159-residue chain is MSRMPSSFDVTERDLDDMTFGERIIYHCKKQPLVPIGCLLTTGAVILAAQNVRLGNKWKAQYYFRWRVGLQAATLVALVAGSFIYGTSGKELKAKEEQLKEKAKMREKLWIQELERREEETEARRKRAELARMKTLENEEEIKNLEKELSDLENKLGKK.

The region spanning 5 to 96 (PSSFDVTERD…TSGKELKAKE (92 aa)) is the HIG1 domain. A run of 2 helical transmembrane segments spans residues 32–52 (PLVPIGCLLTTGAVILAAQNV) and 68–88 (VGLQAATLVALVAGSFIYGTS). The stretch at 88-159 (SGKELKAKEE…SDLENKLGKK (72 aa)) forms a coiled coil.

It belongs to the RCF1 family. Associates with the respiratory chain complex III/complex IV supercomplex. Interacts with COX3.

Its subcellular location is the mitochondrion membrane. Functionally, cytochrome c oxidase subunit required for growth under hypoxic conditions. Involved in the assembly of the Complex III-Complex IV supercomplex, as well as in the recruitment of COX13 and RCF2 into cytochrome c oxidase. May also be required for late-stage assembly of the COX12 and COX13 subunits and for cytochrome c oxidase activity. This Saccharomyces cerevisiae (strain RM11-1a) (Baker's yeast) protein is Respiratory supercomplex factor 1, mitochondrial (RCF1).